Consider the following 827-residue polypeptide: Tuftelin-interacting protein 11 (827 aa).

Disordered stretches follow at residues F31 to V129 and Q179 to V203. Residues T41–P60 show a composition bias toward basic and acidic residues. Acidic residues predominate over residues D88–E98. Residues K99–P112 show a composition bias toward basic and acidic residues. In terms of domain architecture, G-patch spans T145–S191.

The protein belongs to the TFP11/STIP family. Identified in the spliceosome C complex.

The protein localises to the nucleus. Involved in pre-mRNA splicing, specifically in spliceosome disassembly during late-stage splicing events. This Gallus gallus (Chicken) protein is Tuftelin-interacting protein 11 (TFIP11).